The sequence spans 478 residues: Vitronectin (478 aa).

The N-terminal stretch at 1 to 19 (MAPLRPLLILALLAWVALA) is a signal peptide. The SMB domain occupies 20 to 63 (DQESCKGRCTEGFNVDKKCQCDELCSYYQSCCTDYTAECKPQVT). Disulfide bonds link Cys24-Cys28, Cys24-Cys40, Cys28-Cys58, Cys38-Cys40, Cys38-Cys51, Cys44-Cys50, and Cys51-Cys58. The short motif at 64 to 66 (RGD) is the Cell attachment site element. Thr69 is modified (phosphothreonine; by CK2; in vitro). Tyr75 is modified (sulfotyrosine). Thr76 is modified (phosphothreonine; by CK2; in vitro). Tyr78 is subject to Sulfotyrosine. An N-linked (GlcNAc...) (complex) asparagine glycan is attached at Asn86. Residues 91 to 158 (EQVGGPSLTS…PPAEEELCSG (68 aa)) form a disordered region. Polar residues predominate over residues 97-112 (SLTSDLQAQSKGNPEQ). Ser130 and Ser137 each carry phosphoserine. Basic and acidic residues predominate over residues 133-143 (EGIDSRPETLH). 3 Hemopexin repeats span residues 158–202 (GKPF…VWGI), 203–250 (EGPI…FDGI), and 251–305 (PDNV…FEHF). N-linked (GlcNAc...) asparagine glycosylation is present at Asn169. Asn242 carries N-linked (GlcNAc...) (complex) asparagine glycosylation. Position 282 is a sulfotyrosine (Tyr282). Cys293 and Cys430 are disulfide-bonded. Residue Ser312 is modified to Phosphoserine. A heparin-binding region spans residues 362-395 (RPSLAKKQRFRHRNRKGYRSQRGHSRGRNQNSRR). A disordered region spans residues 364–398 (SLAKKQRFRHRNRKGYRSQRGHSRGRNQNSRRPSR). Over residues 365 to 388 (LAKKQRFRHRNRKGYRSQRGHSRG) the composition is skewed to basic residues. The residue at position 397 (Ser397) is a Phosphoserine; by PKA. 2 positions are modified to sulfotyrosine: Tyr417 and Tyr420. A Hemopexin 4 repeat occupies 419–472 (DYRMDWLVPATCEPIQSVFFFSGDKYYRVNLRTRRVDTVDPPYPRSIAQYWLGC).

As to quaternary structure, exists in two forms: a single chain 75 kDa form (V75) and a clipped form composed of two chains (65 kDa and 10 kDa) (V65+V10) which are held together by a disulfide bond. Interacts with SERPINE1/PAI1, insulin and C1QBP. (Microbial infection) Interacts (via hemopexin repeat 2) with P.falciparum (isolate CDC / Honduras) SERA5 P47 (via C-terminus); may form heterotetramers of two VTN and SERA5 P47 heterodimers; the interaction may protect merozoites from phagocytosis by host monocytes; VTN glycosylation appears to be dispensable for the interaction. In terms of processing, sulfated on tyrosine residues. Post-translationally, N- and O-glycosylated. Phosphorylation on Thr-69 and Thr-76 favors cell adhesion and spreading. In terms of processing, it has been suggested that the active SMB domain may be permitted considerable disulfide bond heterogeneity or variability, thus two alternate disulfide patterns based on 3D structures are described with 1 disulfide bond conserved in both. Post-translationally, phosphorylation sites are present in the extracellular medium. In terms of tissue distribution, expressed in the retina pigment epithelium (at protein level). Expressed in plasma (at protein level). Expressed in serum (at protein level).

The protein localises to the secreted. The protein resides in the extracellular space. Its subcellular location is the parasitophorous vacuole. In terms of biological role, vitronectin is a cell adhesion and spreading factor found in serum and tissues. Vitronectin interact with glycosaminoglycans and proteoglycans. Is recognized by certain members of the integrin family and serves as a cell-to-substrate adhesion molecule. Inhibitor of the membrane-damaging effect of the terminal cytolytic complement pathway. Its function is as follows. Somatomedin-B is a growth hormone-dependent serum factor with protease-inhibiting activity. This is Vitronectin (VTN) from Homo sapiens (Human).